The following is a 254-amino-acid chain: NADPH-dependent ferric-chelate reductase (254 aa).

The 122-residue stretch at 15–136 (LRFRELTVLR…AGPRGSLVVP (122 aa)) folds into the FAD-binding FR-type domain.

The protein belongs to the SIP oxidoreductase family.

It is found in the cytoplasm. It catalyses the reaction 2 a Fe(II)-siderophore + NADP(+) + H(+) = 2 a Fe(III)-siderophore + NADPH. Functionally, plays a role in iron homeostasis under excess nickel conditions. This Escherichia coli (strain K12) protein is NADPH-dependent ferric-chelate reductase (yqjH).